Consider the following 100-residue polypeptide: Urease subunit gamma (100 aa).

Belongs to the urease gamma subunit family. In terms of assembly, heterotrimer of UreA (gamma), UreB (beta) and UreC (alpha) subunits. Three heterotrimers associate to form the active enzyme.

The protein localises to the cytoplasm. It catalyses the reaction urea + 2 H2O + H(+) = hydrogencarbonate + 2 NH4(+). It participates in nitrogen metabolism; urea degradation; CO(2) and NH(3) from urea (urease route): step 1/1. This chain is Urease subunit gamma, found in Burkholderia mallei (strain NCTC 10247).